The sequence spans 133 residues: Small ribosomal subunit protein uS11 (133 aa).

The protein belongs to the universal ribosomal protein uS11 family. In terms of assembly, part of the 30S ribosomal subunit. Interacts with proteins S7 and S18. Binds to IF-3.

Located on the platform of the 30S subunit, it bridges several disparate RNA helices of the 16S rRNA. Forms part of the Shine-Dalgarno cleft in the 70S ribosome. In Chlamydia pneumoniae (Chlamydophila pneumoniae), this protein is Small ribosomal subunit protein uS11.